A 903-amino-acid polypeptide reads, in one-letter code: MVKELKVAEAYQGDVGRGIARIDPYTMEELGLKPGDVIEIEGPKGKAYAIVYRGFLEDAGKGIIRIDGYLRQNAGVAIGDRVKVKRVEIKEAKKVVLAPTQPIRFGPGFEDFVKRKILGQVLSKGSKVTIGVLGTALTFVVVSTTPAGPVRVTDFTHVELKEEPVSEIKETKVPDVTYEDIGGLKEEVKKVREMIELPMRHPELFEKLGIEPPKGVLLVGPPGTGKTLLAKAVANEAGANFYVINGPEIMSKYVGETEENLRKIFEEAEENAPSIIFIDEIDAIAPKRDEATGEVERRLVAQLLTLMDGLKGRGQVVVIGATNRPNALDPALRRPGRFDREIVIGVPDREGRKEILQIHTRNMPLAEDVDLDYLADVTHGFVGADLAALCKEAAMRALRRVLPSIDLEAEEIPKEVLDNLKVTMDDFKEALKDVEPSAMREVLVEVPNVKWEDIGGLEEVKQELREAVEWPLKAKEVFEKIGVRPPKGVLLFGPPGTGKTLLAKAVANESGANFISVKGPEIFSKWVGESEKAIREIFRKARQSAPCIIFFDEIDAIAPKRGRDLSSAVTDKVVNQLLTELDGMEEPKDVVVIAATNRPDIIDPALLRPGRLDRVILVPVPDEKARLDIFKIHTRSMNLAEDVNLEELAKKTEGYTGADIEALCREAAMLAVRESIGKPWDIEVKLRELINYLQSISGTFRAAAVELNSVIKATKERESAEAGEFSELKNAIGKIISVLSPAKEKIEAVEKEIDKFLEVINKEELKPSEKDEAQKLAKYLKDILGKLKEMIDNIYELENKLNTLKEQVSAEEIDEIIKTTQNIIQRFTTSLDELKNILKDIESIRLKVSTKDVKIKKEHFMKALEKIKPSVSKEDMRVYEKLAQEYGRATSVEKKKEEGKEVI.

Residues G220–T227 and G493–T500 contribute to the ATP site.

This sequence belongs to the AAA ATPase family. CDC48 subfamily.

The sequence is that of Cell division cycle protein 48 homolog MJ1156 from Methanocaldococcus jannaschii (strain ATCC 43067 / DSM 2661 / JAL-1 / JCM 10045 / NBRC 100440) (Methanococcus jannaschii).